Here is a 278-residue protein sequence, read N- to C-terminus: ADP-dependent (S)-NAD(P)H-hydrate dehydratase (278 aa).

The region spanning Asp-4–Leu-276 is the YjeF C-terminal domain. Residues Ala-39, Gly-102, and His-152 each coordinate (6S)-NADPHX. Gly-216 is a binding site for AMP. Asp-217 provides a ligand contact to (6S)-NADPHX.

It belongs to the NnrD/CARKD family. As to quaternary structure, homotetramer. Mg(2+) serves as cofactor.

It carries out the reaction (6S)-NADHX + ADP = AMP + phosphate + NADH + H(+). The catalysed reaction is (6S)-NADPHX + ADP = AMP + phosphate + NADPH + H(+). Catalyzes the dehydration of the S-form of NAD(P)HX at the expense of ADP, which is converted to AMP. Together with NAD(P)HX epimerase, which catalyzes the epimerization of the S- and R-forms, the enzyme allows the repair of both epimers of NAD(P)HX, a damaged form of NAD(P)H that is a result of enzymatic or heat-dependent hydration. The polypeptide is ADP-dependent (S)-NAD(P)H-hydrate dehydratase (Streptococcus thermophilus).